Here is a 332-residue protein sequence, read N- to C-terminus: Protein FAM9A (332 aa).

The span at 1-13 shows a compositional bias: basic residues; the sequence is MEPVGRKRSRKAA. Disordered regions lie at residues 1–114 and 186–293; these read MEPV…EHTG and QKDD…PTGV. Composition is skewed to basic and acidic residues over residues 74–91 and 98–114; these read GKDPVRDECEERNPFTET and DEHGEREPFAEKDEHTG. A compositionally biased stretch (low complexity) spans 196-217; the sequence is AAAAAAEAAAAAEAAAAAAEVI. Acidic residues predominate over residues 218 to 275; sequence VVEDEEEEEKEEEEEKEEEEEEGEEEGGGEEGEEGGGGGEGEETEEEEEEEEEEEEEE. A compositionally biased stretch (basic and acidic residues) spans 276-285; that stretch reads QIKAFQEKQK.

This sequence belongs to the XLR/SYCP3 family. Expressed exclusively in testis.

It is found in the nucleus. The protein resides in the nucleolus. The chain is Protein FAM9A from Homo sapiens (Human).